Reading from the N-terminus, the 368-residue chain is Chaperone protein DnaJ (368 aa).

Residues 5–69 (DYYEVLGLDK…QKRAQYDRFG (65 aa)) enclose the J domain. The CR-type zinc-finger motif lies at 126-208 (GKTETIELEI…CHGSGHVKKK (83 aa)). Positions 139, 142, 156, 159, 182, 185, 196, and 199 each coordinate Zn(2+). CXXCXGXG motif repeat units lie at residues 139 to 146 (CDTCMGSG), 156 to 163 (CNRCGGSG), 182 to 189 (CSQCHGSG), and 196 to 203 (CPTCHGSG).

The protein belongs to the DnaJ family. Homodimer. Requires Zn(2+) as cofactor.

The protein resides in the cytoplasm. Participates actively in the response to hyperosmotic and heat shock by preventing the aggregation of stress-denatured proteins and by disaggregating proteins, also in an autonomous, DnaK-independent fashion. Unfolded proteins bind initially to DnaJ; upon interaction with the DnaJ-bound protein, DnaK hydrolyzes its bound ATP, resulting in the formation of a stable complex. GrpE releases ADP from DnaK; ATP binding to DnaK triggers the release of the substrate protein, thus completing the reaction cycle. Several rounds of ATP-dependent interactions between DnaJ, DnaK and GrpE are required for fully efficient folding. Also involved, together with DnaK and GrpE, in the DNA replication of plasmids through activation of initiation proteins. The polypeptide is Chaperone protein DnaJ (Exiguobacterium sp. (strain ATCC BAA-1283 / AT1b)).